Reading from the N-terminus, the 224-residue chain is Uracil-DNA glycosylase (224 aa).

Catalysis depends on Asp-62, which acts as the Proton acceptor.

The protein belongs to the uracil-DNA glycosylase (UDG) superfamily. UNG family.

It is found in the cytoplasm. It catalyses the reaction Hydrolyzes single-stranded DNA or mismatched double-stranded DNA and polynucleotides, releasing free uracil.. In terms of biological role, excises uracil residues from the DNA which can arise as a result of misincorporation of dUMP residues by DNA polymerase or due to deamination of cytosine. The polypeptide is Uracil-DNA glycosylase (Aliivibrio salmonicida (strain LFI1238) (Vibrio salmonicida (strain LFI1238))).